The sequence spans 472 residues: Divalent metal cation transporter MntH (472 aa).

11 helical membrane passes run L59–W79, M92–A112, L136–G156, V167–M187, A196–A216, V233–P253, L288–F308, L325–A345, V377–Q397, L402–L422, and W439–L459.

This sequence belongs to the NRAMP family.

It localises to the cell inner membrane. Its function is as follows. H(+)-stimulated, divalent metal cation uptake system. The protein is Divalent metal cation transporter MntH of Xylella fastidiosa (strain 9a5c).